A 229-amino-acid chain; its full sequence is Large ribosomal subunit protein uL1 (229 aa).

Belongs to the universal ribosomal protein uL1 family. In terms of assembly, part of the 50S ribosomal subunit.

Its function is as follows. Binds directly to 23S rRNA. The L1 stalk is quite mobile in the ribosome, and is involved in E site tRNA release. Protein L1 is also a translational repressor protein, it controls the translation of the L11 operon by binding to its mRNA. The sequence is that of Large ribosomal subunit protein uL1 from Haemophilus influenzae (strain 86-028NP).